The sequence spans 944 residues: Protein translocase subunit SecA (944 aa).

ATP-binding positions include glutamine 96, 114-118 (GEGKT), and aspartate 554.

Belongs to the SecA family. In terms of assembly, monomer and homodimer. Part of the essential Sec protein translocation apparatus which comprises SecA, SecYEG and auxiliary proteins SecDF. Other proteins may also be involved.

Its subcellular location is the cell inner membrane. The protein resides in the cytoplasm. It catalyses the reaction ATP + H2O + cellular proteinSide 1 = ADP + phosphate + cellular proteinSide 2.. Functionally, part of the Sec protein translocase complex. Interacts with the SecYEG preprotein conducting channel. Has a central role in coupling the hydrolysis of ATP to the transfer of proteins into and across the cell membrane, serving as an ATP-driven molecular motor driving the stepwise translocation of polypeptide chains across the membrane. The chain is Protein translocase subunit SecA from Hydrogenobaculum sp. (strain Y04AAS1).